The chain runs to 216 residues: Nucleoside triphosphate pyrophosphatase (216 aa).

Aspartate 86 (proton acceptor) is an active-site residue.

This sequence belongs to the Maf family. A divalent metal cation is required as a cofactor.

The protein resides in the cytoplasm. It catalyses the reaction a ribonucleoside 5'-triphosphate + H2O = a ribonucleoside 5'-phosphate + diphosphate + H(+). It carries out the reaction a 2'-deoxyribonucleoside 5'-triphosphate + H2O = a 2'-deoxyribonucleoside 5'-phosphate + diphosphate + H(+). Its function is as follows. Nucleoside triphosphate pyrophosphatase. May have a dual role in cell division arrest and in preventing the incorporation of modified nucleotides into cellular nucleic acids. The chain is Nucleoside triphosphate pyrophosphatase from Dictyostelium discoideum (Social amoeba).